Here is a 262-residue protein sequence, read N- to C-terminus: Adenosylcobinamide-GDP ribazoletransferase (262 aa).

6 consecutive transmembrane segments (helical) span residues 43-63 (YFGLVGLLVGLLSAIIFWLTQ), 66-86 (LPAGVSVLLSMLTGILLTGGF), 120-140 (GALALIMVLLLKWQLLVELAL), 146-166 (AGSAMIVAHTVSRVVAASLIF), 191-211 (LFILIASGVLVLLVLKGIAAL), and 242-262 (AAQQICEIVCYFVLLVVGGIL).

Belongs to the CobS family. It depends on Mg(2+) as a cofactor.

It localises to the cell inner membrane. It carries out the reaction alpha-ribazole + adenosylcob(III)inamide-GDP = adenosylcob(III)alamin + GMP + H(+). The catalysed reaction is alpha-ribazole 5'-phosphate + adenosylcob(III)inamide-GDP = adenosylcob(III)alamin 5'-phosphate + GMP + H(+). It functions in the pathway cofactor biosynthesis; adenosylcobalamin biosynthesis; adenosylcobalamin from cob(II)yrinate a,c-diamide: step 7/7. Joins adenosylcobinamide-GDP and alpha-ribazole to generate adenosylcobalamin (Ado-cobalamin). Also synthesizes adenosylcobalamin 5'-phosphate from adenosylcobinamide-GDP and alpha-ribazole 5'-phosphate. This chain is Adenosylcobinamide-GDP ribazoletransferase, found in Shewanella oneidensis (strain ATCC 700550 / JCM 31522 / CIP 106686 / LMG 19005 / NCIMB 14063 / MR-1).